Consider the following 678-residue polypeptide: Ribosome biogenesis protein BOP1 homolog (678 aa).

The span at 1-10 shows a compositional bias: basic and acidic residues; that stretch reads MGHSDGDHGS. The disordered stretch occupies residues 1–73; the sequence is MGHSDGDHGS…VAPRNTIGDV (73 aa). Residues 24–63 show a composition bias toward acidic residues; sequence WSDDDDEGSLSFEDSGEGSDAESDEPDAPAVEESDSSEDE. WD repeat units follow at residues 343–384, 386–424, 463–505, 508–548, 549–588, 592–631, and 647–678; these read GHNG…KVWN, GGVV…EDAQ, IHHK…SHHP, KLPG…KKLE, SGVR…RPYK, NHSK…DLNQ, and SDGR…LYCD.

Belongs to the WD repeat BOP1/ERB1 family.

Its subcellular location is the nucleus. It localises to the nucleolus. The protein resides in the nucleoplasm. In terms of biological role, required for maturation of ribosomal RNAs and formation of the large ribosomal subunit. This is Ribosome biogenesis protein BOP1 homolog from Oryza sativa subsp. japonica (Rice).